A 365-amino-acid chain; its full sequence is MTARVSADLPRTLLVMAGGTGGHIFPALSVARLLAARGWQVVWLGNASGMEGQLVPKHGFPLESVRFGGVRGKGLVTKFLLPLNLLRAFWQSLGVVRRVRPNVVLGMGGYITFPGGMMSVLLGAPLVLHEQNSIAGLANRVLARVADRVLCAFPGALPGAEWVGNPIRADLAALPSPQARYAERSGPLRVLVVGGSLGAAALNDVVPRALALLPADTRPIVIHQAGAKQIDTLRANYAAVGIDETHAQAVPFIDDMAAAYAQADLVICRAGAMTVSEVAAAGVAALFVPFPHAVDDHQTTNARFLSERGAALLVPQPSLGPASLADTLASLTRAQLADMAAKAREQARPEAAERVADICVAAARA.

Residues 20-22, Asn132, Arg168, Ser196, Ile253, and Gln298 contribute to the UDP-N-acetyl-alpha-D-glucosamine site; that span reads TGG.

This sequence belongs to the glycosyltransferase 28 family. MurG subfamily.

Its subcellular location is the cell inner membrane. The catalysed reaction is di-trans,octa-cis-undecaprenyl diphospho-N-acetyl-alpha-D-muramoyl-L-alanyl-D-glutamyl-meso-2,6-diaminopimeloyl-D-alanyl-D-alanine + UDP-N-acetyl-alpha-D-glucosamine = di-trans,octa-cis-undecaprenyl diphospho-[N-acetyl-alpha-D-glucosaminyl-(1-&gt;4)]-N-acetyl-alpha-D-muramoyl-L-alanyl-D-glutamyl-meso-2,6-diaminopimeloyl-D-alanyl-D-alanine + UDP + H(+). The protein operates within cell wall biogenesis; peptidoglycan biosynthesis. Its function is as follows. Cell wall formation. Catalyzes the transfer of a GlcNAc subunit on undecaprenyl-pyrophosphoryl-MurNAc-pentapeptide (lipid intermediate I) to form undecaprenyl-pyrophosphoryl-MurNAc-(pentapeptide)GlcNAc (lipid intermediate II). The protein is UDP-N-acetylglucosamine--N-acetylmuramyl-(pentapeptide) pyrophosphoryl-undecaprenol N-acetylglucosamine transferase of Ralstonia nicotianae (strain ATCC BAA-1114 / GMI1000) (Ralstonia solanacearum).